The chain runs to 396 residues: L-lactate dehydrogenase (396 aa).

Residues 1-380 (MIISAASDYR…TQDSLVQGLG (380 aa)) enclose the FMN hydroxy acid dehydrogenase domain. Residue Tyr24 coordinates substrate. Residues Ser106 and Gln127 each coordinate FMN. Substrate is bound at residue Tyr129. Thr155 contributes to the FMN binding site. Position 164 (Arg164) interacts with substrate. Position 251 (Lys251) interacts with FMN. His275 serves as the catalytic Proton acceptor. Position 278 (Arg278) interacts with substrate. 306–330 (DSGIRNGLDVVRMIALGADTILLGR) is a binding site for FMN.

It belongs to the FMN-dependent alpha-hydroxy acid dehydrogenase family. It depends on FMN as a cofactor.

The protein localises to the cell inner membrane. It catalyses the reaction (S)-lactate + A = pyruvate + AH2. Catalyzes the conversion of L-lactate to pyruvate. Is coupled to the respiratory chain. In Escherichia coli O81 (strain ED1a), this protein is L-lactate dehydrogenase.